A 253-amino-acid chain; its full sequence is 5'-nucleotidase SurE (253 aa).

The a divalent metal cation site is built by Asp8, Asp9, Ser39, and Asn91.

Belongs to the SurE nucleotidase family. A divalent metal cation is required as a cofactor.

The protein resides in the cytoplasm. The catalysed reaction is a ribonucleoside 5'-phosphate + H2O = a ribonucleoside + phosphate. Nucleotidase that shows phosphatase activity on nucleoside 5'-monophosphates. This chain is 5'-nucleotidase SurE, found in Albidiferax ferrireducens (strain ATCC BAA-621 / DSM 15236 / T118) (Rhodoferax ferrireducens).